Here is a 249-residue protein sequence, read N- to C-terminus: Metallo-beta-lactamase type 2 (249 aa).

An N-terminal signal peptide occupies residues 1-18 (MKTVFILISMLFPVAVMA). Zn(2+)-binding residues include His99, His101, Asp103, His162, and Cys181. 2 residues coordinate substrate: Lys184 and Asn193. His223 contributes to the Zn(2+) binding site.

This sequence belongs to the metallo-beta-lactamase superfamily. Class-B beta-lactamase family. As to quaternary structure, monomer. The cofactor is Zn(2+).

The protein resides in the periplasm. The enzyme catalyses a beta-lactam + H2O = a substituted beta-amino acid. Its activity is regulated as follows. Competitively inhibited by 4-morpholineethanesulfonic acid (MES), SB236050 and biphenyl tetrazoles (BPTs). Also inhibited by chelating agents such as EDTA and 1,10-phenanthroline. CcrA is not susceptible to inactivation by the beta-lactamase-blocking agents clavulanic acid or tazobactam. In terms of biological role, confers resistance to the different beta-lactams antibiotics (penicillin, cephalosporin and carbapenem) via the hydrolysis of the beta-lactam ring. In Bacteroides fragilis, this protein is Metallo-beta-lactamase type 2.